A 140-amino-acid chain; its full sequence is Large-conductance mechanosensitive channel (140 aa).

3 helical membrane passes run 14 to 34, 37 to 57, and 66 to 86; these read VLDLAVGVIIGGAFTSIVKSL, YLINPLIGLFIGGIDFSDWVL, and FGSFINAVINFLIIAFVVFIL.

The protein belongs to the MscL family. In terms of assembly, homopentamer.

It localises to the cell membrane. Channel that opens in response to stretch forces in the membrane lipid bilayer. May participate in the regulation of osmotic pressure changes within the cell. The chain is Large-conductance mechanosensitive channel from Pediococcus pentosaceus (strain ATCC 25745 / CCUG 21536 / LMG 10740 / 183-1w).